We begin with the raw amino-acid sequence, 195 residues long: Imidazoleglycerol-phosphate dehydratase (195 aa).

Belongs to the imidazoleglycerol-phosphate dehydratase family.

It is found in the cytoplasm. It carries out the reaction D-erythro-1-(imidazol-4-yl)glycerol 3-phosphate = 3-(imidazol-4-yl)-2-oxopropyl phosphate + H2O. The protein operates within amino-acid biosynthesis; L-histidine biosynthesis; L-histidine from 5-phospho-alpha-D-ribose 1-diphosphate: step 6/9. The sequence is that of Imidazoleglycerol-phosphate dehydratase from Dinoroseobacter shibae (strain DSM 16493 / NCIMB 14021 / DFL 12).